A 365-amino-acid chain; its full sequence is tRNA(Met) cytidine acetate ligase (365 aa).

ATP contacts are provided by residues isoleucine 7–leucine 20, glycine 96, asparagine 152, and arginine 175.

This sequence belongs to the TmcAL family.

Its subcellular location is the cytoplasm. The catalysed reaction is cytidine(34) in elongator tRNA(Met) + acetate + ATP = N(4)-acetylcytidine(34) in elongator tRNA(Met) + AMP + diphosphate. Catalyzes the formation of N(4)-acetylcytidine (ac(4)C) at the wobble position of elongator tRNA(Met), using acetate and ATP as substrates. First activates an acetate ion to form acetyladenylate (Ac-AMP) and then transfers the acetyl group to tRNA to form ac(4)C34. This is tRNA(Met) cytidine acetate ligase from Streptococcus pneumoniae (strain ATCC BAA-255 / R6).